The following is a 122-amino-acid chain: Large ribosomal subunit protein uL14 (122 aa).

The protein belongs to the universal ribosomal protein uL14 family. Part of the 50S ribosomal subunit. Forms a cluster with proteins L3 and L19. In the 70S ribosome, L14 and L19 interact and together make contacts with the 16S rRNA in bridges B5 and B8.

Its function is as follows. Binds to 23S rRNA. Forms part of two intersubunit bridges in the 70S ribosome. The chain is Large ribosomal subunit protein uL14 from Cellvibrio japonicus (strain Ueda107) (Pseudomonas fluorescens subsp. cellulosa).